Consider the following 468-residue polypeptide: Uronate isomerase (468 aa).

It belongs to the metallo-dependent hydrolases superfamily. Uronate isomerase family.

The catalysed reaction is D-glucuronate = D-fructuronate. It carries out the reaction aldehydo-D-galacturonate = keto-D-tagaturonate. The protein operates within carbohydrate metabolism; pentose and glucuronate interconversion. The sequence is that of Uronate isomerase from Bacteroides fragilis (strain ATCC 25285 / DSM 2151 / CCUG 4856 / JCM 11019 / LMG 10263 / NCTC 9343 / Onslow / VPI 2553 / EN-2).